A 186-amino-acid polypeptide reads, in one-letter code: Interferon beta-2 (186 aa).

The signal sequence occupies residues 1–21 (MTHRCLLQMVLLLCFSTTALS). An intrachain disulfide couples Cys-52 to Cys-161. N-linked (GlcNAc...) asparagine glycans are attached at residues Asn-131 and Asn-173.

The protein belongs to the alpha/beta interferon family. In terms of assembly, monomer.

The protein localises to the secreted. Has antiviral, antibacterial and anticancer activities. This is Interferon beta-2 (IFNB2) from Bos taurus (Bovine).